The following is a 116-amino-acid chain: Small ribosomal subunit protein bS16 (116 aa).

It belongs to the bacterial ribosomal protein bS16 family.

This Chlamydia trachomatis serovar A (strain ATCC VR-571B / DSM 19440 / HAR-13) protein is Small ribosomal subunit protein bS16.